The chain runs to 206 residues: Large ribosomal subunit protein uL4 (206 aa).

Residues 43–78 (ARSGNRKQKDREEVKHTTKKPWRQKGTGRARAGMSS) are disordered. The span at 49–58 (KQKDREEVKH) shows a compositional bias: basic and acidic residues. Over residues 59 to 70 (TTKKPWRQKGTG) the composition is skewed to basic residues.

The protein belongs to the universal ribosomal protein uL4 family. In terms of assembly, part of the 50S ribosomal subunit.

Its function is as follows. One of the primary rRNA binding proteins, this protein initially binds near the 5'-end of the 23S rRNA. It is important during the early stages of 50S assembly. It makes multiple contacts with different domains of the 23S rRNA in the assembled 50S subunit and ribosome. In terms of biological role, forms part of the polypeptide exit tunnel. This is Large ribosomal subunit protein uL4 from Ralstonia pickettii (strain 12J).